A 259-amino-acid polypeptide reads, in one-letter code: Eukaryotic translation initiation factor 3 subunit G-2 (259 aa).

In terms of domain architecture, RRM spans Ser-179–Pro-257.

It belongs to the eIF-3 subunit G family. As to quaternary structure, component of the eukaryotic translation initiation factor 3 (eIF-3) complex. The eIF-3 complex interacts with pix.

The protein localises to the cytoplasm. RNA-binding component of the eukaryotic translation initiation factor 3 (eIF-3) complex, which is involved in protein synthesis of a specialized repertoire of mRNAs and, together with other initiation factors, stimulates binding of mRNA and methionyl-tRNAi to the 40S ribosome. The eIF-3 complex specifically targets and initiates translation of a subset of mRNAs involved in cell proliferation. This subunit can bind 18S rRNA. In Drosophila mojavensis (Fruit fly), this protein is Eukaryotic translation initiation factor 3 subunit G-2.